The chain runs to 158 residues: Large ribosomal subunit protein uL15 (158 aa).

Disordered regions lie at residues 1–53 and 138–158; these read MRIH…FEGG and ESAG…SNNE. The segment covering 23 to 35 has biased composition (gly residues); it reads ISAGQGASGGFGM. Over residues 145-158 the composition is skewed to polar residues; the sequence is QDLSDTSNAPSNNE.

The protein belongs to the universal ribosomal protein uL15 family. In terms of assembly, part of the 50S ribosomal subunit.

Functionally, binds to the 23S rRNA. This Crocosphaera subtropica (strain ATCC 51142 / BH68) (Cyanothece sp. (strain ATCC 51142)) protein is Large ribosomal subunit protein uL15.